We begin with the raw amino-acid sequence, 255 residues long: Taurine import ATP-binding protein TauB (255 aa).

Residues 2–229 (LQISHLYADY…RFVAGESSRS (228 aa)) form the ABC transporter domain. An ATP-binding site is contributed by 34–41 (GPSGCGKT).

The protein belongs to the ABC transporter superfamily. Taurine importer (TC 3.A.1.17.1) family. The complex is composed of two ATP-binding proteins (TauB), two transmembrane proteins (TauC) and a solute-binding protein (TauA).

Its subcellular location is the cell inner membrane. The enzyme catalyses taurine(out) + ATP + H2O = taurine(in) + ADP + phosphate + H(+). Part of the ABC transporter complex TauABC involved in taurine import. Responsible for energy coupling to the transport system. The protein is Taurine import ATP-binding protein TauB of Escherichia coli O6:K15:H31 (strain 536 / UPEC).